Consider the following 304-residue polypeptide: NADH-cytochrome b5 reductase 2 (304 aa).

Residues 9-29 (MLVALAVIGVTVLLFLIKALG) form a helical membrane-spanning segment. Residues 43 to 155 (NAKYPLPLIE…RGPNGLLVYK (113 aa)) form the FAD-binding FR-type domain. Residues 135 to 150 (DSLK…GPNG) and 174 to 209 (VAKH…KCSL) each bind FAD.

This sequence belongs to the flavoprotein pyridine nucleotide cytochrome reductase family. Requires FAD as cofactor.

Its subcellular location is the membrane. The enzyme catalyses 2 Fe(III)-[cytochrome b5] + NADH = 2 Fe(II)-[cytochrome b5] + NAD(+) + H(+). In terms of biological role, NADH-cytochrome b5 reductases are involved in desaturation and elongation of fatty acids, cholesterol biosynthesis and drug metabolism. The chain is NADH-cytochrome b5 reductase 2 (cyb5r2) from Xenopus tropicalis (Western clawed frog).